A 1088-amino-acid chain; its full sequence is MATHLSHPQRRPPLLRQAVKIRRRRVRDLQDPPPQATPEVQVQSHHFSPEERDLLYEEALYTVLHRLGQPEPNHVKEASELLCYLQEAFQVQPEEHQQMLQRVRELEKPIFCLKATVKQAKGILGKDVSGFSDPYCLLGIEQKVGVPEGSPVSRRRQKAVVRHTIPEEETHRTQVKTQTLNPVWDETFILEFEDITNASFHLDMWDLDTVESVRHKLGELTDLHGLRRIFKEARKDKGQDDFLGNVMLRLQDLRCREDQWFPLEPCTETYPDRGQCHLQFQFIHKRRATVASRSQPSYTVHFHLLQQLVSHEVTQHQAGGTSWGRIAESQAVTILFLHATQKDLSDFHQSMAQWLAYSRLYQSLEFPSSCLLHPITSIEYQWIQGRLKAEQREELATSFTSLLAYGLSLIRKFRSVFPLSVSDSPSRLQSLLRVLVQMCKMKAFGELCPDSAPLPQLVSEALRMGTVEWFHLMQQHHQPMVQGILEAGKALLSLVQDVMGDLYQCRRTWNKIFHNVLKIDLFTMAFLELQWLVAKRVQDHTAAVGDLVSPDVGESLFQLYVSLREFCQLGPSDSHEVLALDGFHRWFQSAIPSWLQRTYSVALERVQRAVQMDSLVPLGELTKHSTSAVDLSTCFAQISHTARQLDWPDPEEAFMITVKFVEDTCRLALVYCSLIKARARELSAVQKDQSQAADMLCVVVNNVERLRLIIDKLPTQLAWEALEQRVGAVLEQGQLQNTLHTQLQGALAGLGHEIRTGVRTLAEQLEVGIATHIQKLIDAKGSILPEDAILPLMKFLEVKLCYMNTNLVQENFSSLLTLLWTHTLTVLVEAAASHRNSSLASSRLKVALQNLEICFHAEGCGLPPEALHTDTFLALQSDLELQAASSRELIQKYFRSRIQQQAETTSERLGAVTVKASYRASEQKLHVELLSASSLLPLDSNGSSDPFVQLTLEPRHEFPELAPRETQKHKKELHPLFDETFEFLVPAEPCQKDGACLLLTVLDHDRLGADDLEGEAFLPLCRVPGLTGCVEPGEAPQMRLPLTYPAPNGDPILRLLESRKGDREAQAFVKLRRQRAKQASQHAPATEP.

The disordered stretch occupies residues 26–46; it reads VRDLQDPPPQATPEVQVQSHH. The C2 1 domain maps to 92-239; the sequence is QPEEHQQMLQ…FKEARKDKGQ (148 aa). Residues Asp-127 and Asp-133 each contribute to the Ca(2+) site. Ser-150 bears the Phosphoserine mark. Residues Asp-206 and Asp-208 each contribute to the Ca(2+) site. The interval 240–543 is interaction with RAB27A; it reads DDFLGNVMLR…AKRVQDHTAA (304 aa). Residues 557–675 enclose the MHD1 domain; the sequence is FQLYVSLREF…RLALVYCSLI (119 aa). Positions 786-893 constitute an MHD2 domain; the sequence is EDAILPLMKF…ASSRELIQKY (108 aa). Positions 908-1033 constitute a C2 2 domain; sequence RLGAVTVKAS…PGLTGCVEPG (126 aa). 6 residues coordinate Ca(2+): Leu-938, Asp-939, Asp-945, Asp-1003, Asp-1005, and Asp-1011.

It belongs to the unc-13 family. Interacts with RAB27A and DOC2A. Interacts with RhoG; the interaction increases RhoG affinity to the membrane lipids, targets Unc13d to membrane lipids and facilitates cytotoxic granule (CG) docking to the plasma membrane. Ca(2+) serves as cofactor. In terms of tissue distribution, expressed in lung bronchial epithelium goblet/mucous cells. Also expressed in spleen and testis. Expressed at very low levels in heart muscle, kidney, liver, brain and skeletal muscle.

It localises to the cytoplasm. The protein localises to the membrane. Its subcellular location is the late endosome. The protein resides in the recycling endosome. It is found in the lysosome. Its function is as follows. Plays a role in cytotoxic granule exocytosis in lymphocytes. Required for both granule maturation and granule docking and priming at the immunologic synapse. Regulates assembly of recycling and late endosomal structures, leading to the formation of an endosomal exocytic compartment that fuses with perforin-containing granules at the immunologic synapse and licences them for exocytosis. Regulates Ca(2+)-dependent secretory lysosome exocytosis in mast cells. The protein is Protein unc-13 homolog D (Unc13d) of Rattus norvegicus (Rat).